We begin with the raw amino-acid sequence, 185 residues long: Peptidyl-tRNA hydrolase (185 aa).

A tRNA-binding site is contributed by Tyr-14. His-19 serves as the catalytic Proton acceptor. TRNA is bound by residues Phe-64, Asn-66, and Asn-112.

The protein belongs to the PTH family. In terms of assembly, monomer.

Its subcellular location is the cytoplasm. It carries out the reaction an N-acyl-L-alpha-aminoacyl-tRNA + H2O = an N-acyl-L-amino acid + a tRNA + H(+). Its function is as follows. Hydrolyzes ribosome-free peptidyl-tRNAs (with 1 or more amino acids incorporated), which drop off the ribosome during protein synthesis, or as a result of ribosome stalling. Catalyzes the release of premature peptidyl moieties from peptidyl-tRNA molecules trapped in stalled 50S ribosomal subunits, and thus maintains levels of free tRNAs and 50S ribosomes. The protein is Peptidyl-tRNA hydrolase of Halalkalibacterium halodurans (strain ATCC BAA-125 / DSM 18197 / FERM 7344 / JCM 9153 / C-125) (Bacillus halodurans).